We begin with the raw amino-acid sequence, 332 residues long: UPF0194 membrane protein YbhG (332 aa).

An N-terminal signal peptide occupies residues 1–16; it reads MMKKTVVIGLAVVVLA. Residues 108 to 209 adopt a coiled-coil conformation; the sequence is EEIAQAAAAV…LNLQDSTLIA (102 aa).

It belongs to the UPF0194 family.

Its subcellular location is the periplasm. The polypeptide is UPF0194 membrane protein YbhG (Shigella dysenteriae serotype 1 (strain Sd197)).